Reading from the N-terminus, the 379-residue chain is Cytochrome b (379 aa).

4 consecutive transmembrane segments (helical) span residues 33–53 (FGSL…FLAM), 77–98 (WTIR…FIHV), 113–133 (WNVG…GYVL), and 178–198 (FFAL…IHLL). Residues histidine 83 and histidine 97 each contribute to the heme b site. Heme b-binding residues include histidine 182 and histidine 196. An a ubiquinone-binding site is contributed by histidine 201. The next 4 helical transmembrane spans lie at 226-246 (TKDF…ALFY), 288-308 (LGGV…PFLQ), 320-340 (LSQF…WIGG), and 347-367 (FINI…FIMP).

This sequence belongs to the cytochrome b family. As to quaternary structure, the cytochrome bc1 complex contains 11 subunits: 3 respiratory subunits (MT-CYB, CYC1 and UQCRFS1), 2 core proteins (UQCRC1 and UQCRC2) and 6 low-molecular weight proteins (UQCRH/QCR6, UQCRB/QCR7, UQCRQ/QCR8, UQCR10/QCR9, UQCR11/QCR10 and a cleavage product of UQCRFS1). This cytochrome bc1 complex then forms a dimer. Heme b serves as cofactor.

The protein localises to the mitochondrion inner membrane. Component of the ubiquinol-cytochrome c reductase complex (complex III or cytochrome b-c1 complex) that is part of the mitochondrial respiratory chain. The b-c1 complex mediates electron transfer from ubiquinol to cytochrome c. Contributes to the generation of a proton gradient across the mitochondrial membrane that is then used for ATP synthesis. This chain is Cytochrome b (MT-CYB), found in Lepilemur sahamalazensis (Sahamalaza sportive lemur).